Consider the following 497-residue polypeptide: Dihydrolipoyl dehydrogenase (497 aa).

FAD-binding positions include E60–C69, K78, G142, and T170–S172. C69 and C74 are joined by a disulfide. NAD(+) contacts are provided by residues G207–E214, E230, V264, and G302. FAD contacts are provided by residues D343 and M349–H352. The active-site Proton acceptor is H475.

The protein belongs to the class-I pyridine nucleotide-disulfide oxidoreductase family. In terms of assembly, homodimer. The cofactor is FAD.

The protein localises to the cytoplasm. The enzyme catalyses N(6)-[(R)-dihydrolipoyl]-L-lysyl-[protein] + NAD(+) = N(6)-[(R)-lipoyl]-L-lysyl-[protein] + NADH + H(+). This Manduca sexta (Tobacco hawkmoth) protein is Dihydrolipoyl dehydrogenase.